We begin with the raw amino-acid sequence, 484 residues long: Phosphomevalonate kinase erg8 (484 aa).

Residues Arg54–Asp77 form a disordered region. Ala184 to Ala194 contributes to the ATP binding site.

The protein belongs to the GHMP kinase family. Mevalonate kinase subfamily.

The enzyme catalyses (R)-5-phosphomevalonate + ATP = (R)-5-diphosphomevalonate + ADP. The protein operates within isoprenoid biosynthesis; isopentenyl diphosphate biosynthesis via mevalonate pathway; isopentenyl diphosphate from (R)-mevalonate: step 2/3. In terms of biological role, phosphomevalonate kinase; part of the second module of ergosterol biosynthesis pathway that includes the middle steps of the pathway. Erg8 converts 5-phosphomevalonate to 5-diphosphomevalonate. The second module is carried out in the vacuole and involves the formation of farnesyl diphosphate, which is also an important intermediate in the biosynthesis of ubiquinone, dolichol, heme and prenylated proteins. Activity by the mevalonate kinase erg12 (AFUA_4G07780) first converts mevalonate into 5-phosphomevalonate. 5-phosphomevalonate is then further converted to 5-diphosphomevalonate by the phosphomevalonate kinase erg8 (AFUA_5G10680). The diphosphomevalonate decarboxylase mvd1 (AFUA_4G07130) then produces isopentenyl diphosphate. The isopentenyl-diphosphate delta-isomerase idi1 (AFUA_6G11160) then catalyzes the 1,3-allylic rearrangement of the homoallylic substrate isopentenyl (IPP) to its highly electrophilic allylic isomer, dimethylallyl diphosphate (DMAPP). Finally the farnesyl diphosphate synthase erg20 (AFUA_5G02450) catalyzes the sequential condensation of isopentenyl pyrophosphate with dimethylallyl pyrophosphate, and then with the resultant geranylpyrophosphate to the ultimate product farnesyl pyrophosphate. The sequence is that of Phosphomevalonate kinase erg8 from Aspergillus fumigatus (strain ATCC MYA-4609 / CBS 101355 / FGSC A1100 / Af293) (Neosartorya fumigata).